A 214-amino-acid polypeptide reads, in one-letter code: Cytolysin tenebrosin-B (214 aa).

Residues 1–19 form the signal peptide; it reads MNRLIIVFIVVTMICAATA. A propeptide spanning residues 20 to 35 is cleaved from the precursor; sequence LSTKRRINKEEKDEKR. The interval 38–47 is plays an important role in the hemolytic activity; the sequence is AVAGAVIEGA. The interval 46–65 is N-terminal region; it reads GATLTFNVLQTVLKALGDIS. Positions 89, 122, 140, 142, 168, 172, and 173 each coordinate phosphocholine. The tract at residues 140–155 is trp-rich region, which is important for the binding to lipid membrane; sequence SIPFDYNLYSNWWNVK. The Cell attachment site, crucial for protein stability motif lies at 179–181; sequence RGD.

It belongs to the actinoporin family. Sea anemone subfamily. As to quaternary structure, octamer or nonamer in membranes. Monomer in the soluble state.

It localises to the secreted. The protein resides in the nematocyst. It is found in the target cell membrane. Its function is as follows. Pore-forming protein that forms cations-selective hydrophilic pores of around 1 nm and causes cardiac stimulation and cytolysis. Pore formation is a multi-step process that involves specific recognition of membrane sphingomyelin (but neither cholesterol nor phosphatidylcholine) using aromatic rich region and adjacent phosphocholine (POC) binding site, firm binding to the membrane (mainly driven by hydrophobic interactions) accompanied by the transfer of the N-terminal region to the lipid-water interface and finally pore formation after oligomerization of monomers. This chain is Cytolysin tenebrosin-B, found in Actinia tenebrosa (Australian red waratah sea anemone).